The chain runs to 321 residues: Glucokinase (321 aa).

8–13 (GDVGGT) lines the ATP pocket.

The protein belongs to the bacterial glucokinase family.

Its subcellular location is the cytoplasm. The catalysed reaction is D-glucose + ATP = D-glucose 6-phosphate + ADP + H(+). The polypeptide is Glucokinase (Shigella dysenteriae serotype 1 (strain Sd197)).